A 442-amino-acid chain; its full sequence is Proline--tRNA ligase (442 aa).

This sequence belongs to the class-II aminoacyl-tRNA synthetase family. ProS type 2 subfamily. In terms of assembly, homodimer.

Its subcellular location is the cytoplasm. It carries out the reaction tRNA(Pro) + L-proline + ATP = L-prolyl-tRNA(Pro) + AMP + diphosphate. Its function is as follows. Catalyzes the attachment of proline to tRNA(Pro) in a two-step reaction: proline is first activated by ATP to form Pro-AMP and then transferred to the acceptor end of tRNA(Pro). This is Proline--tRNA ligase from Brucella melitensis biotype 2 (strain ATCC 23457).